Consider the following 993-residue polypeptide: Desmoglein-3 (993 aa).

The N-terminal stretch at 1–23 (MTCLFPRALGSLALLMVVLLVQG) is a signal peptide. Positions 24–49 (ELHVKPGGQHREDGTALQLAKRRYKR) are excised as a propeptide. Cadherin domains lie at 50-157 (EWVK…PPIF), 158-267 (SQTI…FPVL), 268-388 (RESQ…PPSK), and 384-495 (RPPS…CPSV). The Extracellular segment spans residues 50-617 (EWVKFAKPCR…YGESSWRLGP (568 aa)). 2 N-linked (GlcNAc...) asparagine glycosylation sites follow: Asn-110 and Asn-180. N-linked (GlcNAc...) asparagine glycans are attached at residues Asn-459 and Asn-546. Residues 618–638 (AAIGLILLGLLMLLLAPLLLL) form a helical membrane-spanning segment. Over 639–993 (TCDCGSGPIG…LYTKETCSHL (355 aa)) the chain is Cytoplasmic. Residues 641 to 714 (DCGSGPIGGA…NTYAGGTMVE (74 aa)) are required for interaction with CTNND1 and localization at cell-cell junctions. The tract at residues 845–876 (AKQAKPGPKDSGSGADTCARSMEVPQSGSNRY) is disordered. 2 Desmoglein repeat repeats span residues 905-930 (MSTS…LLTE) and 931-961 (TYST…ERVI).

Homodimer. Part of a complex that contains DSG3, PKP1, YAP1 and YWHAG; the complex is required for localization of DSG3 and YAP1 to the cell membrane in keratinocytes. Interacts with PKP2. Interacts with CTNND1; the interaction facilitates DSG3 localization and retention at cell-cell junctions. Interacts with CDH1; the interaction is required for CDH1 localization to developing adherens junctions. Interacts with RAC1; the interaction is required for DSG3 translocation to cell-cell junctions, organization of cortical F-actin bundles and actin anchoring at cell-cell junctions. Interacts with DSC3; the interaction may limit the interaction of DSC3 with p38MAPK family members and therefore repress p38MAPK signaling activation. As to expression, expressed in the basal layer of the outer root sheath of the telogen hair club, specifically at the cell membrane between the apex of the cells and the surrounding hair club (at protein level). Expression is less abundant between the lateral margins of the outer root sheath basal cells (at protein level). Expressed in epidermis. Expressed in the epithelium of the tongue.

It is found in the cell membrane. Its subcellular location is the cell junction. The protein localises to the desmosome. It localises to the cytoplasm. The protein resides in the tight junction. Its function is as follows. A component of desmosome cell-cell junctions which are required for positive regulation of cellular adhesion. Required for adherens and desmosome junction assembly in response to mechanical force in keratinocytes. Required for desmosome-mediated cell-cell adhesion of cells surrounding the telogen hair club and the basal layer of the outer root sheath epithelium, consequently is essential for the anchoring of telogen hairs in the hair follicle. Required for the maintenance of the epithelial barrier via promoting desmosome-mediated intercellular attachment of suprabasal epithelium to basal cells. May play a role in the protein stability of the desmosome plaque components DSP, JUP, PKP1, PKP2 and PKP3. Required for YAP1 localization at the plasma membrane in keratinocytes in response to mechanical strain, via the formation of an interaction complex composed of DSG3, PKP1 and YWHAG. May also be involved in the positive regulation of YAP1 target gene transcription and as a result cell proliferation. Positively regulates cellular contractility and cell junction formation via organization of cortical F-actin bundles and anchoring of actin to tight junctions, in conjunction with RAC1. The cytoplasmic pool of DSG3 is required for the localization of CDH1 and CTNNB1 at developing adherens junctions, potentially via modulation of SRC activity. Inhibits keratinocyte migration via suppression of p38MAPK signaling, may therefore play a role in moderating wound healing. This is Desmoglein-3 (Dsg3) from Mus musculus (Mouse).